The chain runs to 213 residues: Uridine kinase (213 aa).

Residue 14–21 (GASASGKS) coordinates ATP.

The protein belongs to the uridine kinase family.

The protein resides in the cytoplasm. The catalysed reaction is uridine + ATP = UMP + ADP + H(+). It catalyses the reaction cytidine + ATP = CMP + ADP + H(+). The protein operates within pyrimidine metabolism; CTP biosynthesis via salvage pathway; CTP from cytidine: step 1/3. It participates in pyrimidine metabolism; UMP biosynthesis via salvage pathway; UMP from uridine: step 1/1. In Vibrio vulnificus (strain CMCP6), this protein is Uridine kinase.